A 340-amino-acid polypeptide reads, in one-letter code: GTPase Obg (340 aa).

The Obg domain occupies Met-1–Leu-159. In terms of domain architecture, OBG-type G spans Ser-160–Ser-329. GTP-binding positions include Gly-166–Ser-173, Phe-191–Lys-195, Asp-212–Gly-215, Asn-279–Asp-282, and Gly-310–Asp-312. Mg(2+)-binding residues include Ser-173 and Thr-193.

It belongs to the TRAFAC class OBG-HflX-like GTPase superfamily. OBG GTPase family. As to quaternary structure, monomer. Requires Mg(2+) as cofactor.

Its subcellular location is the cytoplasm. An essential GTPase which binds GTP, GDP and possibly (p)ppGpp with moderate affinity, with high nucleotide exchange rates and a fairly low GTP hydrolysis rate. Plays a role in control of the cell cycle, stress response, ribosome biogenesis and in those bacteria that undergo differentiation, in morphogenesis control. This is GTPase Obg from Wolbachia sp. subsp. Brugia malayi (strain TRS).